The primary structure comprises 208 residues: Uracil phosphoribosyltransferase (208 aa).

5-phospho-alpha-D-ribose 1-diphosphate contacts are provided by residues arginine 78, arginine 103, and 130 to 138 (DPMLATGVS). Residues isoleucine 193 and 198–200 (GDA) contribute to the uracil site. Residue aspartate 199 coordinates 5-phospho-alpha-D-ribose 1-diphosphate.

This sequence belongs to the UPRTase family. Requires Mg(2+) as cofactor.

The enzyme catalyses UMP + diphosphate = 5-phospho-alpha-D-ribose 1-diphosphate + uracil. The protein operates within pyrimidine metabolism; UMP biosynthesis via salvage pathway; UMP from uracil: step 1/1. Allosterically activated by GTP. Catalyzes the conversion of uracil and 5-phospho-alpha-D-ribose 1-diphosphate (PRPP) to UMP and diphosphate. This is Uracil phosphoribosyltransferase from Thermosipho africanus (strain TCF52B).